The following is a 447-amino-acid chain: Blue-light photoreceptor PHR2 (447 aa).

A compositionally biased stretch (polar residues) spans 1–14 (MDSSNVEENLNPET). Residues 1–20 (MDSSNVEENLNPETKSAEEQ) form a disordered region. The Photolyase/cryptochrome alpha/beta domain maps to 115–249 (RAAVVWFRND…EVKYFWGSTL (135 aa)).

Belongs to the DNA photolyase class-1 family. The cofactor is FAD.

The polypeptide is Blue-light photoreceptor PHR2 (PHR2) (Arabidopsis thaliana (Mouse-ear cress)).